Consider the following 340-residue polypeptide: MGLNLKDLVVREKTTLEAFSNKVIAIDAYNAIYQFLASIRGPDGLQLSDSEGRITSHLSGLLYRNVNFLSLGIKPVYVFDGKPPSLKTAEIERRKQIKMDATIKYEKAIADGNMEDARKYAQQTTSMKDGMVKESKQLLTYFGIPYIEAPSEGEATAAHLTNTGQAYASASQDFDSILCGAKRLVRNFTNSGRRKIPNKNTYIDIVPEIIETQKTLDSLELTREELIDVGILIGTDFNPNGFERVGPKTALKMIKQHSKLEEIPQIQEQLEEIDYQEIRKIFLNPEVADVKEIVFENVNYEGMSNYLVRERSFSEDRVNSTLNRLKKALEKKSQNLDQWF.

Positions Met1 to Lys98 are N-domain. Residues Asp27, Asp80, Glu152, Glu154, Asp173, Asp175, and Asp236 each coordinate Mg(2+). Residues Asp116–Ser258 form an I-domain region.

The protein belongs to the XPG/RAD2 endonuclease family. FEN1 subfamily. As to quaternary structure, interacts with PCNA. PCNA stimulates the nuclease activity without altering cleavage specificity. Mg(2+) serves as cofactor.

Functionally, structure-specific nuclease with 5'-flap endonuclease and 5'-3' exonuclease activities involved in DNA replication and repair. During DNA replication, cleaves the 5'-overhanging flap structure that is generated by displacement synthesis when DNA polymerase encounters the 5'-end of a downstream Okazaki fragment. Binds the unpaired 3'-DNA end and kinks the DNA to facilitate 5' cleavage specificity. Cleaves one nucleotide into the double-stranded DNA from the junction in flap DNA, leaving a nick for ligation. Also involved in the base excision repair (BER) pathway. Acts as a genome stabilization factor that prevents flaps from equilibrating into structures that lead to duplications and deletions. Also possesses 5'-3' exonuclease activity on nicked or gapped double-stranded DNA. This Nitrosopumilus maritimus (strain SCM1) protein is Flap endonuclease 1.